A 250-amino-acid polypeptide reads, in one-letter code: Anti-sigma-L factor RslA (250 aa).

Residues 1–115 (MTMPLRGLGP…VHRRRRRTRL (115 aa)) are Cytoplasmic-facing. A helical membrane pass occupies residues 116-136 (ITWVASSAAAAVLAIGVLVGV). Residues 137-250 (QGHSAAPQRA…TGQVLLQRSL (114 aa)) are Extracellular-facing.

As to quaternary structure, interacts with ECF RNA polymerase sigma factor SigL; this should inhibit the interaction of SigL with the RNA polymerase catalytic core. Probably cleaved within the membrane by Rip1 near the cytoplasmic membrane interface.

The protein resides in the cell membrane. In terms of biological role, an anti-sigma factor for extracytoplasmic function (ECF) sigma factor SigL. ECF sigma factors are held in an inactive form by an anti-sigma factor until released by regulated intramembrane proteolysis (RIP). RIP occurs when an extracytoplasmic signal triggers a concerted proteolytic cascade to transmit information and elicit cellular responses. The membrane-spanning regulatory substrate protein is first cut extracytoplasmically (site-1 protease, S1P), then within the membrane itself (site-2 protease, S2P, Rip1), while cytoplasmic proteases finish degrading the regulatory protein, liberating the sigma factor. The polypeptide is Anti-sigma-L factor RslA (rslA) (Mycobacterium tuberculosis (strain ATCC 35801 / TMC 107 / Erdman)).